The following is a 330-amino-acid chain: 2-methoxy-6-polyprenyl-1,4-benzoquinol methylase, mitochondrial (330 aa).

A mitochondrion-targeting transit peptide spans 1–42 (MAAPRSWALWSFCGCGWSRAVSGCRLPGLRSSSPRGPLGARL). Residues Thr117, Asp171, and 199 to 200 (DA) contribute to the S-adenosyl-L-methionine site.

Belongs to the class I-like SAM-binding methyltransferase superfamily. MenG/UbiE family. In terms of assembly, component of a multi-subunit COQ enzyme complex, composed of at least COQ3, COQ4, COQ5, COQ6, COQ7 and COQ9. Interacts with PYURF; the interaction is direct, stabilizes COQ5 protein and associates PYURF with COQ enzyme complex.

Its subcellular location is the mitochondrion inner membrane. The enzyme catalyses 2-methoxy-6-(all-trans-decaprenyl)benzene-1,4-diol + S-adenosyl-L-methionine = 5-methoxy-2-methyl-3-(all-trans-decaprenyl)benzene-1,4-diol + S-adenosyl-L-homocysteine + H(+). It participates in cofactor biosynthesis; ubiquinone biosynthesis. Its function is as follows. Methyltransferase required for the conversion of 2-decaprenyl-6-methoxy-1,4-benzoquinol (DDMQH2) to 2-decaprenyl-3-methyl-6-methoxy-1,4-benzoquinol (DMQH2). This chain is 2-methoxy-6-polyprenyl-1,4-benzoquinol methylase, mitochondrial, found in Bos taurus (Bovine).